A 436-amino-acid chain; its full sequence is tRNA-2-methylthio-N(6)-dimethylallyladenosine synthase (436 aa).

Residues 5–121 (RKLFIKTYGC…LPDMLERTEG (117 aa)) enclose the MTTase N-terminal domain. Positions 14, 50, 84, 158, 162, and 165 each coordinate [4Fe-4S] cluster. One can recognise a Radical SAM core domain in the interval 144–373 (ALRGPTAFLT…LGEQQRAAQA (230 aa)). Positions 373–435 (AAMVGRELGV…PNSLAGERIG (63 aa)) constitute a TRAM domain.

The protein belongs to the methylthiotransferase family. MiaB subfamily. As to quaternary structure, monomer. [4Fe-4S] cluster serves as cofactor.

The protein localises to the cytoplasm. The enzyme catalyses N(6)-dimethylallyladenosine(37) in tRNA + (sulfur carrier)-SH + AH2 + 2 S-adenosyl-L-methionine = 2-methylsulfanyl-N(6)-dimethylallyladenosine(37) in tRNA + (sulfur carrier)-H + 5'-deoxyadenosine + L-methionine + A + S-adenosyl-L-homocysteine + 2 H(+). Functionally, catalyzes the methylthiolation of N6-(dimethylallyl)adenosine (i(6)A), leading to the formation of 2-methylthio-N6-(dimethylallyl)adenosine (ms(2)i(6)A) at position 37 in tRNAs that read codons beginning with uridine. In Cereibacter sphaeroides (strain ATCC 17025 / ATH 2.4.3) (Rhodobacter sphaeroides), this protein is tRNA-2-methylthio-N(6)-dimethylallyladenosine synthase.